The chain runs to 147 residues: Putative cystatin-9-like protein CST9LP1 (147 aa).

The signal sequence occupies residues 1 to 28; that stretch reads MWSLPPSRALSCAPLLLLFSFQFLVTYA. A disulfide bridge links C98 with C108. 2 N-linked (GlcNAc...) asparagine glycosylation sites follow: N117 and N139. A disulfide bridge connects residues C122 and C142.

It belongs to the cystatin family.

The protein localises to the secreted. The polypeptide is Putative cystatin-9-like protein CST9LP1 (CST9LP1) (Homo sapiens (Human)).